We begin with the raw amino-acid sequence, 662 residues long: UvrABC system protein B (662 aa).

Residues lysine 25–arginine 182 form the Helicase ATP-binding domain. Glycine 38–threonine 45 contacts ATP. A Beta-hairpin motif is present at residues tyrosine 91–isoleucine 114. A Helicase C-terminal domain is found at glutamine 429 to isoleucine 595. The UVR domain occupies aspartate 622–aspartate 657.

The protein belongs to the UvrB family. As to quaternary structure, forms a heterotetramer with UvrA during the search for lesions. Interacts with UvrC in an incision complex.

Its subcellular location is the cytoplasm. Its function is as follows. The UvrABC repair system catalyzes the recognition and processing of DNA lesions. A damage recognition complex composed of 2 UvrA and 2 UvrB subunits scans DNA for abnormalities. Upon binding of the UvrA(2)B(2) complex to a putative damaged site, the DNA wraps around one UvrB monomer. DNA wrap is dependent on ATP binding by UvrB and probably causes local melting of the DNA helix, facilitating insertion of UvrB beta-hairpin between the DNA strands. Then UvrB probes one DNA strand for the presence of a lesion. If a lesion is found the UvrA subunits dissociate and the UvrB-DNA preincision complex is formed. This complex is subsequently bound by UvrC and the second UvrB is released. If no lesion is found, the DNA wraps around the other UvrB subunit that will check the other stand for damage. The protein is UvrABC system protein B of Clostridium botulinum (strain Loch Maree / Type A3).